A 1291-amino-acid chain; its full sequence is 1-phosphatidylinositol 4,5-bisphosphate phosphodiesterase gamma-1 (1291 aa).

Alanine 2 carries the N-acetylalanine modification. One can recognise a PH 1 domain in the interval 27–142 (RSLEVGTVMT…WIRGLTWLME (116 aa)). The EF-hand domain occupies 152–187 (QIERWLRKQFYSVDRNREDRISAKDLKNMLSQVNYR). Ca(2+) contacts are provided by aspartate 165, asparagine 167, glutamate 169, arginine 171, and aspartate 176. In terms of domain architecture, PI-PLC X-box spans 320-464 (DTMNNPLSHY…LKRKILIKHK (145 aa)). Catalysis depends on residues histidine 335 and histidine 380. The PH 2; first part domain occupies 489–523 (SIKNGILYLEDPVNHEWYPHYFVLTSSKIYYSEET). Tyrosine 506 bears the Phosphotyrosine mark. The tract at residues 522-544 (ETSSDQGNEDEEEPKEASGSTEL) is disordered. 2 SH2 domains span residues 550-657 (WFHG…SEPV) and 668-756 (WYHA…RYPI). The residue at position 771 (tyrosine 771) is a Phosphotyrosine; by SYK. Phosphotyrosine occurs at positions 775 and 783. Position 783 is a phosphotyrosine; by ITK, SYK and TXK (tyrosine 783). In terms of domain architecture, SH3 spans 791 to 851 (TFKCAVKALF…PSNYVEEMVS (61 aa)). Positions 895-931 (FVFSISMASVAHWSLDVAADSQEELQDWVKKIREVAQ) constitute a PH 2; second part domain. The PI-PLC Y-box domain maps to 953 to 1070 (LSELVVYCRP…GYVLQPSVMR (118 aa)). At tyrosine 977 the chain carries Phosphotyrosine. The region spanning 1071 to 1194 (DEAFDPFDKS…TGYRAVPLKN (124 aa)) is the C2 domain. Phosphoserine occurs at positions 1222, 1228, and 1249. Phosphotyrosine is present on tyrosine 1254. Serine 1264 carries the phosphoserine modification. The tract at residues 1271–1291 (HFDGRDRRTPRRTRVNGDNRL) is disordered.

In terms of assembly, interacts with AGAP2 via its SH3 domain. Interacts (via SH2 domain) with RET. Interacts with FLT1 (tyrosine-phosphorylated). Interacts (via SH2 domain) with FGFR1, FGFR2, FGFR3 and FGFR4 (phosphorylated). Interacts with LAT (phosphorylated) upon TCR activation. Interacts (via SH3 domain) with the Pro-rich domain of TNK1. Associates with BLNK, VAV1, GRB2 and NCK1 in a B-cell antigen receptor-dependent fashion. Interacts with CBLB in activated T-cells; which inhibits phosphorylation. Interacts with SHB. Interacts (via SH3 domain) with the Arg/Gly-rich-flanked Pro-rich domains of KHDRBS1/SAM68. This interaction is selectively regulated by arginine methylation of KHDRBS1/SAM68. Interacts with INPP5D/SHIP1, THEMIS and CLNK. Interacts with AXL, FLT4 and KIT. Interacts with RALGPS1. Interacts (via the SH2 domains) with VIL1 (phosphorylated at C-terminus tyrosine phosphorylation sites). Interacts (via SH2 domain) with PDGFRA and PDGFRB (tyrosine phosphorylated). Interacts with PIP5K1C. Interacts with NTRK1 and NTRK2 (phosphorylated upon ligand-binding). Interacts with SYK; activates PLCG1. Interacts with GRB2, LAT and THEMIS upon TCR activation in thymocytes. Interacts with TESPA1; the association is increased with prolonged stimulation of the TCR and may facilitate the assembly of the LAT signalosome. Interacts (via C-terminal proline-rich domain (PRD)) with PLCG1 (via SH3 domain); this interaction leads to guanine nucleotide exchange from PlCG1 to DNM1 and enhances DNM1-dependent endocytosis. Requires Ca(2+) as cofactor. Post-translationally, ubiquitinated by CBLB in activated T-cells. In terms of processing, tyrosine phosphorylated in response to signaling via activated FLT3, KIT and PDGFRA. Tyrosine phosphorylated by activated FGFR1, FGFR2, FGFR3 and FGFR4. Tyrosine phosphorylated by activated FLT1 and KDR. Tyrosine phosphorylated by activated PDGFRB. The receptor-mediated activation of PLCG1 involves its phosphorylation by tyrosine kinases, in response to ligation of a variety of growth factor receptors and immune system receptors. For instance, SYK phosphorylates and activates PLCG1 in response to ligation of the B-cell receptor. May be dephosphorylated by PTPRJ. Phosphorylated by ITK and TXK on Tyr-783 upon TCR activation in T-cells.

The protein localises to the cell projection. The protein resides in the lamellipodium. Its subcellular location is the ruffle. The enzyme catalyses a 1,2-diacyl-sn-glycero-3-phospho-(1D-myo-inositol-4,5-bisphosphate) + H2O = 1D-myo-inositol 1,4,5-trisphosphate + a 1,2-diacyl-sn-glycerol + H(+). It catalyses the reaction a 1,2-diacyl-sn-glycero-3-phospho-(1D-myo-inositol) + H2O = 1D-myo-inositol 1-phosphate + a 1,2-diacyl-sn-glycerol + H(+). With respect to regulation, activated by phosphorylation on tyrosine residues. Mediates the production of the second messenger molecules diacylglycerol (DAG) and inositol 1,4,5-trisphosphate (IP3). Plays an important role in the regulation of intracellular signaling cascades. Becomes activated in response to ligand-mediated activation of receptor-type tyrosine kinases, such as PDGFRA, PDGFRB, EGFR, FGFR1, FGFR2, FGFR3 and FGFR4. Plays a role in actin reorganization and cell migration. Guanine nucleotide exchange factor that binds the GTPase DNM1 and catalyzes the dissociation of GDP, allowing a GTP molecule to bind in its place, therefore enhancing DNM1-dependent endocytosis. This chain is 1-phosphatidylinositol 4,5-bisphosphate phosphodiesterase gamma-1, found in Bos taurus (Bovine).